Consider the following 302-residue polypeptide: Oxygen-dependent coproporphyrinogen-III oxidase (302 aa).

Serine 94 contributes to the substrate binding site. Residues histidine 98 and histidine 108 each coordinate a divalent metal cation. Histidine 108 acts as the Proton donor in catalysis. Position 110-112 (110-112 (NVR)) interacts with substrate. Positions 147 and 177 each coordinate a divalent metal cation. The important for dimerization stretch occupies residues 242 to 277 (YVEFNLVWDRGTLFGLQSGGRTESILMSMPPLARWE). 260 to 262 (GGR) contributes to the substrate binding site.

It belongs to the aerobic coproporphyrinogen-III oxidase family. As to quaternary structure, homodimer. The cofactor is a divalent metal cation.

It is found in the cytoplasm. It carries out the reaction coproporphyrinogen III + O2 + 2 H(+) = protoporphyrinogen IX + 2 CO2 + 2 H2O. It participates in porphyrin-containing compound metabolism; protoporphyrin-IX biosynthesis; protoporphyrinogen-IX from coproporphyrinogen-III (O2 route): step 1/1. Functionally, involved in the heme biosynthesis. Catalyzes the aerobic oxidative decarboxylation of propionate groups of rings A and B of coproporphyrinogen-III to yield the vinyl groups in protoporphyrinogen-IX. This chain is Oxygen-dependent coproporphyrinogen-III oxidase, found in Photorhabdus laumondii subsp. laumondii (strain DSM 15139 / CIP 105565 / TT01) (Photorhabdus luminescens subsp. laumondii).